The primary structure comprises 214 residues: Pyridoxine/pyridoxamine 5'-phosphate oxidase (214 aa).

Substrate is bound by residues 8 to 11 (RTNY) and lysine 66. FMN contacts are provided by residues 61–66 (RIVLIK), 76–77 (FT), arginine 82, lysine 83, and glutamine 105. Residues tyrosine 123, arginine 127, and serine 131 each contribute to the substrate site. FMN contacts are provided by residues 140–141 (QS) and tryptophan 184. Residue 190 to 192 (RLH) coordinates substrate. Arginine 194 is an FMN binding site.

It belongs to the pyridoxamine 5'-phosphate oxidase family. As to quaternary structure, homodimer. Requires FMN as cofactor.

It carries out the reaction pyridoxamine 5'-phosphate + O2 + H2O = pyridoxal 5'-phosphate + H2O2 + NH4(+). The enzyme catalyses pyridoxine 5'-phosphate + O2 = pyridoxal 5'-phosphate + H2O2. It functions in the pathway cofactor metabolism; pyridoxal 5'-phosphate salvage; pyridoxal 5'-phosphate from pyridoxamine 5'-phosphate: step 1/1. Its pathway is cofactor metabolism; pyridoxal 5'-phosphate salvage; pyridoxal 5'-phosphate from pyridoxine 5'-phosphate: step 1/1. In terms of biological role, catalyzes the oxidation of either pyridoxine 5'-phosphate (PNP) or pyridoxamine 5'-phosphate (PMP) into pyridoxal 5'-phosphate (PLP). The chain is Pyridoxine/pyridoxamine 5'-phosphate oxidase from Burkholderia mallei (strain NCTC 10247).